Reading from the N-terminus, the 134-residue chain is Cytochrome b (134 aa).

A run of 3 helical transmembrane segments spans residues 33-53 (FGSLLGVCLAVQILTGLFLAM), 77-98 (WLLRYLHANGASMFFICLYLHV), and 113-133 (WNVGILLLFAVMATAFMGYVL). Residues His-83 and His-97 each contribute to the heme b site.

The protein belongs to the cytochrome b family. In terms of assembly, the cytochrome bc1 complex contains 11 subunits: 3 respiratory subunits (MT-CYB, CYC1 and UQCRFS1), 2 core proteins (UQCRC1 and UQCRC2) and 6 low-molecular weight proteins (UQCRH/QCR6, UQCRB/QCR7, UQCRQ/QCR8, UQCR10/QCR9, UQCR11/QCR10 and a cleavage product of UQCRFS1). This cytochrome bc1 complex then forms a dimer. Heme b is required as a cofactor.

It is found in the mitochondrion inner membrane. Its function is as follows. Component of the ubiquinol-cytochrome c reductase complex (complex III or cytochrome b-c1 complex) that is part of the mitochondrial respiratory chain. The b-c1 complex mediates electron transfer from ubiquinol to cytochrome c. Contributes to the generation of a proton gradient across the mitochondrial membrane that is then used for ATP synthesis. In Chiroderma trinitatum (Little big-eyed bat), this protein is Cytochrome b (MT-CYB).